Here is a 229-residue protein sequence, read N- to C-terminus: Heptaprenylglyceryl phosphate synthase (229 aa).

Sn-glycerol 1-phosphate is bound at residue lysine 12. Mg(2+) contacts are provided by aspartate 14 and serine 40. Sn-glycerol 1-phosphate contacts are provided by residues 159 to 164 (YLEYSG), glycine 189, and 209 to 210 (GN).

This sequence belongs to the GGGP/HepGP synthase family. Group I subfamily. In terms of assembly, homodimer. The cofactor is Mg(2+).

It catalyses the reaction sn-glycerol 1-phosphate + all-trans-heptaprenyl diphosphate = 3-heptaprenyl-sn-glycero-1-phosphate + diphosphate. The protein operates within membrane lipid metabolism; glycerophospholipid metabolism. Its function is as follows. Prenyltransferase that catalyzes in vivo the transfer of the heptaprenyl moiety of heptaprenyl pyrophosphate (HepPP; 35 carbon atoms) to the C3 hydroxyl of sn-glycerol-1-phosphate (G1P), producing heptaprenylglyceryl phosphate (HepGP). This reaction is an ether-bond-formation step in the biosynthesis of archaea-type G1P-based membrane lipids found in Bacillales. The sequence is that of Heptaprenylglyceryl phosphate synthase from Bacillus thuringiensis (strain Al Hakam).